A 342-amino-acid chain; its full sequence is Trans-3-hydroxy-L-proline dehydratase (342 aa).

The Proton acceptor role is filled by S90. Residues 91–92 (GS), D252, and 257–258 (GT) contribute to the substrate site.

The protein belongs to the proline racemase family.

It carries out the reaction trans-3-hydroxy-L-proline = 1-pyrroline-2-carboxylate + H2O. It catalyses the reaction trans-4-hydroxy-L-proline = cis-4-hydroxy-D-proline. Its function is as follows. Catalyzes the dehydration of trans-3-hydroxy-L-proline (t3LHyp) to Delta(1)-pyrroline-2-carboxylate (Pyr2C). Can also catalyze the epimerization of trans-4-hydroxy-L-proline (t4LHyp) to cis-4-hydroxy-D-proline (c4DHyp), albeit with 30-fold lower efficiency. Is likely involved in both degradation pathways that convert t3LHyp to L-proline and t4LHyp to alpha-ketoglutarate, which would allow A.tumefaciens to grow on t3LHyp or t4LHyp as a sole carbon source. Displays no proline racemase activity. The polypeptide is Trans-3-hydroxy-L-proline dehydratase (Agrobacterium fabrum (strain C58 / ATCC 33970) (Agrobacterium tumefaciens (strain C58))).